A 76-amino-acid chain; its full sequence is MAERPLDVIHRSLDKDVLVLLKRGGEFRGKLIGYDIHLNVVLAGADYIQDGEVVKSYGKIVVRGDNVLAISPVDIE.

Residues 4–76 enclose the Sm domain; it reads RPLDVIHRSL…VLAISPVDIE (73 aa).

Belongs to the snRNP Sm proteins family.

The polypeptide is Putative snRNP Sm-like protein (Thermococcus gammatolerans (strain DSM 15229 / JCM 11827 / EJ3)).